Consider the following 450-residue polypeptide: MSHSACPKPATARHSQALTGEIRIPGDKSISHRSFMFGGLASGKTRITGLLEGEDVINTGRAMQAMGARIRKEGDVWIINGVGNGCLLQPEAPLDFGNAGTGARLTMGLVGTYDMKTSFIGDASLSKRPMGRVLNPLREMGVQVEAAEGDRMPLTLIGPRTANPIAYRVPMASAQVKSAVLLAGLNTPGVTTVIEPVMTRDHTEKMLQGFGADLTVETDKDGVRHIRIVGQGKLTGQTIDVPGDPSSTAFPLVAALLVEGSEVTIRNVLMNPTRTGLILTLQEMGADIEIIDPRLAGGEDVADLRVKASKLKGVVVPPERAPSMIDEYPVLAIAASFAEGETVMDGLDELRVKESDRLAAVARGLEANGVDCTEGEMSLTVRGRPGGKGLGGGTVATHLDHRIAMSFLVMGLASEKPVTVDDSTMIATSFPEFMGMMAGLGAKIAESGAE.

Residues lysine 28, serine 29, and arginine 33 each contribute to the 3-phosphoshikimate site. Lysine 28 is a binding site for phosphoenolpyruvate. Positions 100 and 128 each coordinate phosphoenolpyruvate. Positions 173, 175, 326, and 353 each coordinate 3-phosphoshikimate. Glutamine 175 is a binding site for phosphoenolpyruvate. The active-site Proton acceptor is aspartate 326. Residues arginine 357 and arginine 402 each contribute to the phosphoenolpyruvate site.

It belongs to the EPSP synthase family. In terms of assembly, monomer.

The protein resides in the cytoplasm. It catalyses the reaction 3-phosphoshikimate + phosphoenolpyruvate = 5-O-(1-carboxyvinyl)-3-phosphoshikimate + phosphate. It functions in the pathway metabolic intermediate biosynthesis; chorismate biosynthesis; chorismate from D-erythrose 4-phosphate and phosphoenolpyruvate: step 6/7. Its function is as follows. Catalyzes the transfer of the enolpyruvyl moiety of phosphoenolpyruvate (PEP) to the 5-hydroxyl of shikimate-3-phosphate (S3P) to produce enolpyruvyl shikimate-3-phosphate and inorganic phosphate. This is 3-phosphoshikimate 1-carboxyvinyltransferase from Brucella abortus (strain S19).